Here is a 314-residue protein sequence, read N- to C-terminus: DNA-directed RNA polymerase subunit alpha (314 aa).

An alpha N-terminal domain (alpha-NTD) region spans residues 1 to 228 (MAQYTIECVE…DQLRPLQEIT (228 aa)). Residues 241 to 314 (NTVGQVPIEE…SLPKDKPARS (74 aa)) are alpha C-terminal domain (alpha-CTD).

This sequence belongs to the RNA polymerase alpha chain family. As to quaternary structure, in cyanobacteria the RNAP catalytic core is composed of 2 alpha, 1 beta, 1 beta', 1 gamma and 1 omega subunit. When a sigma factor is associated with the core the holoenzyme is formed, which can initiate transcription.

The enzyme catalyses RNA(n) + a ribonucleoside 5'-triphosphate = RNA(n+1) + diphosphate. Functionally, DNA-dependent RNA polymerase catalyzes the transcription of DNA into RNA using the four ribonucleoside triphosphates as substrates. The protein is DNA-directed RNA polymerase subunit alpha of Gloeobacter violaceus (strain ATCC 29082 / PCC 7421).